The following is a 727-amino-acid chain: BRCA1-A complex subunit RAP80 (727 aa).

Residues 1-23 (MPRRKKKIKEASESQNLEKKDLE) form a disordered region. Residues 1-101 (MPRRKKKIKE…SEQEAREVNN (101 aa)) are necessary for transcriptional repression. Basic and acidic residues predominate over residues 9–23 (KEASESQNLEKKDLE). Lys20 is covalently cross-linked (Glycyl lysine isopeptide (Lys-Gly) (interchain with G-Cter in SUMO2)). The residue at position 29 (Ser29) is a Phosphoserine. A Glycyl lysine isopeptide (Lys-Gly) (interchain with G-Cter in SUMO2) cross-link involves residue Lys31. Phosphoserine occurs at positions 44 and 46. The tract at residues 45–70 (DSDGEETKEENGLQKTKTKQSNRSKC) is disordered. At Thr51 the chain carries Phosphothreonine. The segment covering 60–70 (TKTKQSNRSKC) has biased composition (basic residues). Residues 60–78 (TKTKQSNRSKCLAKRKVAH) carry the LR motif motif. Glycyl lysine isopeptide (Lys-Gly) (interchain with G-Cter in SUMO2) cross-links involve residues Lys75 and Lys90. UIM domains are found at residues 80 to 99 (SEEE…AREV) and 104 to 124 (EKEE…CWSS). A UIM-linker region spans residues 97–103 (REVNNQE). The necessary for interaction with NR6A1 N-terminus stretch occupies residues 100–200 (NNQEEKEEEL…EEPVSGSSGS (101 aa)). The tract at residues 133 to 206 (PLAAELSSHS…SSGSWDQSSQ (74 aa)) is disordered. Ser140 carries the phosphoserine modification. Basic and acidic residues predominate over residues 176 to 188 (AEQRKEPWDHNEN). Over residues 195–206 (SGSSGSWDQSSQ) the composition is skewed to low complexity. Ser205 bears the Phosphoserine mark. A Glycyl lysine isopeptide (Lys-Gly) (interchain with G-Cter in SUMO2) cross-link involves residue Lys245. The tract at residues 270-400 (TGGTVHYYWG…EEEPTTSRGQ (131 aa)) is AIR. The tract at residues 326 to 427 (PRPPFLIQNE…SEGDNSVPTT (102 aa)) is disordered. Residues 355 to 364 (DEAKEERQES) are compositionally biased toward basic and acidic residues. Ser379 bears the Phosphoserine mark. Residues Lys382 and Lys387 each participate in a glycyl lysine isopeptide (Lys-Gly) (interchain with G-Cter in SUMO2) cross-link. The necessary for interaction with NR6A1 C-terminus stretch occupies residues 400–508 (QSSQGLFVEE…ENPPPAVSSS (109 aa)). At Ser402 the chain carries Phosphoserine. Lys436 is covalently cross-linked (Glycyl lysine isopeptide (Lys-Gly) (interchain with G-Cter in SUMO2)). Phosphoserine is present on Ser474. The UBZ4-type zinc-finger motif lies at 510–537 (RVSCPLCNQDFPPTKIEQHAMYCNGLME). Zn(2+) is bound by residues Cys513, Cys516, His528, and Cys532. Residues 513 to 590 (CPLCNQDFPP…GEYQCHVEAC (78 aa)) form a zinc-finger-like region region. Residues Lys552, Lys570, Lys595, and Lys617 each participate in a glycyl lysine isopeptide (Lys-Gly) (interchain with G-Cter in SUMO2) cross-link. A disordered region spans residues 607–654 (RPRVCAPVEGKQQQRLKKSKDKGHSQGRLLSLLEQSEHRTTGVEKKPK). A Phosphoserine modification is found at Ser637. Residues 641–654 (QSEHRTTGVEKKPK) show a composition bias toward basic and acidic residues. A Glycyl lysine isopeptide (Lys-Gly) (interchain with G-Cter in SUMO2) cross-link involves residue Lys652. 2 positions are modified to phosphoserine: Ser665 and Ser689. Lys708 is covalently cross-linked (Glycyl lysine isopeptide (Lys-Gly) (interchain with G-Cter in SUMO2)).

It belongs to the RAP80 family. In terms of assembly, component of the ARISC complex, at least composed of UIMC1/RAP80, ABRAXAS1, BRCC3/BRCC36, BABAM2 and BABAM1/NBA1. Component of the BRCA1-A complex, at least composed of the BRCA1, BARD1, UIMC1/RAP80, ABRAXAS1, BRCC3/BRCC36, BABAM2 and BABAM1/NBA1. In the BRCA1-A complex, interacts directly with ABRAXAS1. Interacts with ESR1. Interacts with UBE2I. Interacts with NR6A1. Interacts with TSP57. Interacts with TRAIP. Post-translationally, sumoylated. Phosphorylated upon DNA damage by ATM or ATR.

The protein resides in the nucleus. Ubiquitin-binding protein. Specifically recognizes and binds 'Lys-63'-linked ubiquitin. Plays a central role in the BRCA1-A complex by specifically binding 'Lys-63'-linked ubiquitinated histones H2A and H2AX at DNA lesions sites, leading to target the BRCA1-BARD1 heterodimer to sites of DNA damage at double-strand breaks (DSBs). The BRCA1-A complex also possesses deubiquitinase activity that specifically removes 'Lys-63'-linked ubiquitin on histones H2A and H2AX. Also weakly binds monoubiquitin but with much less affinity than 'Lys-63'-linked ubiquitin. May interact with monoubiquitinated histones H2A and H2B; the relevance of such results is however unclear in vivo. Does not bind Lys-48'-linked ubiquitin. May indirectly act as a transcriptional repressor by inhibiting the interaction of NR6A1 with the corepressor NCOR1. In Mus musculus (Mouse), this protein is BRCA1-A complex subunit RAP80 (Uimc1).